The sequence spans 599 residues: Elongation factor 4 (599 aa).

Positions 5–187 (SKIRNFSIVA…AIVKRLPAPT (183 aa)) constitute a tr-type G domain. Residues 17 to 22 (DHGKST) and 134 to 137 (NKID) contribute to the GTP site.

The protein belongs to the TRAFAC class translation factor GTPase superfamily. Classic translation factor GTPase family. LepA subfamily.

The protein resides in the cell inner membrane. The catalysed reaction is GTP + H2O = GDP + phosphate + H(+). In terms of biological role, required for accurate and efficient protein synthesis under certain stress conditions. May act as a fidelity factor of the translation reaction, by catalyzing a one-codon backward translocation of tRNAs on improperly translocated ribosomes. Back-translocation proceeds from a post-translocation (POST) complex to a pre-translocation (PRE) complex, thus giving elongation factor G a second chance to translocate the tRNAs correctly. Binds to ribosomes in a GTP-dependent manner. This chain is Elongation factor 4, found in Ruegeria sp. (strain TM1040) (Silicibacter sp.).